A 266-amino-acid polypeptide reads, in one-letter code: Protein SCO2 homolog, mitochondrial (266 aa).

Residues 1 to 41 (MLLLTRSPTAWHRLSQLKPRVLPGTLGGQALHLRSWLLSRQ) constitute a mitochondrion transit peptide. Topologically, residues 42 to 60 (GPAETGGQGQPQGPGLRTR) are mitochondrial matrix. The helical transmembrane segment at 61–78 (LLITGLFGAGLGGAWLAL) threads the bilayer. At 79-266 (RAEKERLQQQ…HMAAFRSVLS (188 aa)) the chain is on the mitochondrial intermembrane side. The Thioredoxin domain occupies 85–259 (LQQQKRTEAL…ISDSVRRHMA (175 aa)). Cu cation is bound by residues Cys-133, Cys-137, and His-224. Cys-133 and Cys-137 are joined by a disulfide.

The protein belongs to the SCO1/2 family. As to quaternary structure, homodimer. Interacts with COA6. Found in a complex with TMEM177, COX20, COA6, MT-CO2/COX2, COX18 and SCO1. Interacts with TMEM177 in a COX20-dependent manner. Interacts with COX20 in a MT-CO2/COX2- and COX18-dependent manner. Interacts with COX16. Ubiquitous.

It is found in the mitochondrion inner membrane. Functionally, copper metallochaperone essential for the synthesis and maturation of cytochrome c oxidase subunit II (MT-CO2/COX2) by facilitating the incorporation of copper into the Cu(A) site of MT-CO2/COX2. Could also act as a thiol-disulfide oxidoreductase to regulate the redox state of the cysteines in SCO1 during maturation of MT-CO2/COX2. This chain is Protein SCO2 homolog, mitochondrial (SCO2), found in Homo sapiens (Human).